A 375-amino-acid chain; its full sequence is Chaperone protein DnaJ (375 aa).

One can recognise a J domain in the interval 5–69 (DYYEVLGVGK…QKRAHYDQFG (65 aa)). The segment at 132-214 (GKETTIEIPR…CGGTGKVKKR (83 aa)) adopts a CR-type zinc-finger fold. Cysteine 145, cysteine 148, cysteine 162, cysteine 165, cysteine 188, cysteine 191, cysteine 202, and cysteine 205 together coordinate Zn(2+). CXXCXGXG motif repeat units follow at residues 145 to 152 (CETCSGSG), 162 to 169 (CSHCGGSG), 188 to 195 (CHYCNGTG), and 202 to 209 (CSTCGGTG).

The protein belongs to the DnaJ family. In terms of assembly, homodimer. Zn(2+) is required as a cofactor.

Its subcellular location is the cytoplasm. Participates actively in the response to hyperosmotic and heat shock by preventing the aggregation of stress-denatured proteins and by disaggregating proteins, also in an autonomous, DnaK-independent fashion. Unfolded proteins bind initially to DnaJ; upon interaction with the DnaJ-bound protein, DnaK hydrolyzes its bound ATP, resulting in the formation of a stable complex. GrpE releases ADP from DnaK; ATP binding to DnaK triggers the release of the substrate protein, thus completing the reaction cycle. Several rounds of ATP-dependent interactions between DnaJ, DnaK and GrpE are required for fully efficient folding. Also involved, together with DnaK and GrpE, in the DNA replication of plasmids through activation of initiation proteins. This chain is Chaperone protein DnaJ, found in Bacillus licheniformis (strain ATCC 14580 / DSM 13 / JCM 2505 / CCUG 7422 / NBRC 12200 / NCIMB 9375 / NCTC 10341 / NRRL NRS-1264 / Gibson 46).